A 578-amino-acid polypeptide reads, in one-letter code: Proline--tRNA ligase (578 aa).

It belongs to the class-II aminoacyl-tRNA synthetase family. ProS type 1 subfamily. As to quaternary structure, homodimer.

It localises to the cytoplasm. It carries out the reaction tRNA(Pro) + L-proline + ATP = L-prolyl-tRNA(Pro) + AMP + diphosphate. In terms of biological role, catalyzes the attachment of proline to tRNA(Pro) in a two-step reaction: proline is first activated by ATP to form Pro-AMP and then transferred to the acceptor end of tRNA(Pro). As ProRS can inadvertently accommodate and process non-cognate amino acids such as alanine and cysteine, to avoid such errors it has two additional distinct editing activities against alanine. One activity is designated as 'pretransfer' editing and involves the tRNA(Pro)-independent hydrolysis of activated Ala-AMP. The other activity is designated 'posttransfer' editing and involves deacylation of mischarged Ala-tRNA(Pro). The misacylated Cys-tRNA(Pro) is not edited by ProRS. In Burkholderia mallei (strain ATCC 23344), this protein is Proline--tRNA ligase.